The primary structure comprises 471 residues: 3-isopropylmalate dehydratase large subunit (471 aa).

3 residues coordinate [4Fe-4S] cluster: Cys347, Cys407, and Cys410.

It belongs to the aconitase/IPM isomerase family. LeuC type 1 subfamily. Heterodimer of LeuC and LeuD. [4Fe-4S] cluster is required as a cofactor.

It catalyses the reaction (2R,3S)-3-isopropylmalate = (2S)-2-isopropylmalate. Its pathway is amino-acid biosynthesis; L-leucine biosynthesis; L-leucine from 3-methyl-2-oxobutanoate: step 2/4. Catalyzes the isomerization between 2-isopropylmalate and 3-isopropylmalate, via the formation of 2-isopropylmaleate. The chain is 3-isopropylmalate dehydratase large subunit from Anoxybacillus flavithermus (strain DSM 21510 / WK1).